The following is a 396-amino-acid chain: Pre-mRNA-splicing regulator WTAP (396 aa).

Met1 bears the N-acetylmethionine mark. A Phosphoserine modification is found at Ser14. 2 stretches are compositionally biased toward low complexity: residues 240-257 and 278-291; these read QQQQSQASAPSTSRTTSS and SNGSSSRQRTSGSG. The interval 240–396 is disordered; it reads QQQQSQASAP…SSVNVQGAVL (157 aa). Residues Ser297, Ser305, Ser306, and Ser341 each carry the phosphoserine modification. Low complexity predominate over residues 305–316; it reads SSSGNGNKASNS. Residues 340-351 are compositionally biased toward polar residues; sequence DSPTGSENSLTH. Thr350 bears the Phosphothreonine mark. Residues 352 to 368 are compositionally biased toward basic and acidic residues; it reads HSNDTDSSHDPQEEKAV. Residues 380 to 396 are compositionally biased toward polar residues; that stretch reads HVQNGLDSSVNVQGAVL. Ser388 is subject to Phosphoserine.

The protein belongs to the fl(2)d family. Component of the WMM complex, a N6-methyltransferase complex composed of a catalytic subcomplex, named MAC, and of an associated subcomplex, named MACOM. The MAC subcomplex is composed of METTL3 and METTL14. The MACOM subcomplex is composed of WTAP, ZC3H13, CBLL1/HAKAI, VIRMA, and, in some cases of RBM15 (RBM15 or RBM15B). Interacts with WT1. Also a component of a MACOM-like complex, named WTAP complex, composed of WTAP, ZC3H13, CBLL1, VIRMA, RBM15, BCLAF1 and THRAP3. Interacts with CPNE4 (via VWFA domain).

The protein localises to the nucleus speckle. It is found in the nucleus. Its subcellular location is the nucleoplasm. It localises to the cytoplasm. Associated component of the WMM complex, a complex that mediates N6-methyladenosine (m6A) methylation of RNAs, a modification that plays a role in the efficiency of mRNA splicing and RNA processing. Acts as a key regulator of m6A methylation by promoting m6A methylation of mRNAs at the 3'-UTR. Required for accumulation of METTL3 and METTL14 to nuclear speckle. Acts as a mRNA splicing regulator. Regulates G2/M cell-cycle transition by binding to the 3' UTR of CCNA2, which enhances its stability. Impairs WT1 DNA-binding ability and inhibits expression of WT1 target genes. This Mus musculus (Mouse) protein is Pre-mRNA-splicing regulator WTAP.